A 1338-amino-acid polypeptide reads, in one-letter code: Fanconi anemia group I protein (1338 aa).

A Glycyl lysine isopeptide (Lys-Gly) (interchain with G-Cter in ubiquitin) cross-link involves residue lysine 525. Residues serine 558 and serine 561 each carry the phosphoserine modification. The residue at position 567 (threonine 567) is a Phosphothreonine.

This sequence belongs to the Fanconi anemia group I protein family. Homodimer. Part of a FANCI-FANCD2 heterodimeric complex that binds and scans dsDNA for DNA damage. Interacts with FANCL. Interacts with MTMR15/FAN1. Interacts with POLN. Interacts with UBL5; the interaction promotes FANCI homodimerization. Monoubiquitinated by FANCL during S phase and upon genotoxic stress. Deubiquitinated by USP1 as cells enter G2/M, or once DNA repair is completed. Monoubiquitination requires the FANCA-FANCB-FANCC-FANCE-FANCF-FANCG-FANCM complex. Ubiquitination is required for binding to chromatin, DNA repair, and normal cell cycle progression. Monoubiquitination is stimulated by DNA-binding. Post-translationally, phosphorylated in response to DNA damage by ATM and/or ATR. Phosphorylation of FANCI promotes ubiquitination of FANCD2, which prevents DNA release from the FANCI-FANCD2 complex.

Its function is as follows. Plays an essential role in the repair of DNA double-strand breaks by homologous recombination and in the repair of interstrand DNA cross-links (ICLs) by promoting FANCD2 monoubiquitination by FANCL and participating in recruitment to DNA repair sites. The FANCI-FANCD2 complex binds and scans double-stranded DNA (dsDNA) for DNA damage; this complex stalls at DNA junctions between double-stranded DNA and single-stranded DNA. Participates in S phase and G2 phase checkpoint activation upon DNA damage. This Gallus gallus (Chicken) protein is Fanconi anemia group I protein.